Here is an 85-residue protein sequence, read N- to C-terminus: MEKLTVLILVATVLLTIQVLGQSDRDKHLKRRPKQYATKRLSARMRGHRQCTGAGYECEETPECCPNLTCKCSGSPLCTRYSCQA.

An N-terminal signal peptide occupies residues 1 to 23 (MEKLTVLILVATVLLTIQVLGQS). Positions 24-49 (DRDKHLKRRPKQYATKRLSARMRGHR) are excised as a propeptide. A Pyrrolidone carboxylic acid modification is found at glutamine 50.

This sequence belongs to the conotoxin O2 superfamily. Contains 4 disulfide bonds. Expressed by the venom duct.

The protein localises to the secreted. The chain is Conotoxin Mi15a from Conus miles (Soldier cone).